Reading from the N-terminus, the 459-residue chain is DnaJ protein homolog XDJ1 (459 aa).

The J domain occupies Gly-7–Asp-79. The CR-type zinc-finger motif lies at Gly-146–Lys-240. CXXCXGXG motif repeat units follow at residues Cys-159 to Gly-166, Cys-181 to Gly-188, Cys-208 to Gly-215, and Cys-228 to Gly-235.

The protein resides in the mitochondrion outer membrane. This is DnaJ protein homolog XDJ1 (XDJ1) from Saccharomyces cerevisiae (strain ATCC 204508 / S288c) (Baker's yeast).